A 52-amino-acid polypeptide reads, in one-letter code: Phospholamban (52 aa).

Methionine 1 is modified (N-acetylmethionine). Residues 1–31 (MEKVQYITRSALRRASTLEVNPQARQRLQEL) lie on the Cytoplasmic side of the membrane. Phosphoserine; by PKA is present on serine 16. A Phosphothreonine; by CaMK modification is found at threonine 17. The helical transmembrane segment at 32–52 (FVNFCLILICLLLICIIVMLL) threads the bilayer.

It belongs to the phospholamban family. As to quaternary structure, homopentamer. Phosphorylated in response to beta-adrenergic stimulation. Phosphorylation by PKA abolishes the inhibition of ATP2A2-mediated calcium uptake. Heart.

Its subcellular location is the endoplasmic reticulum membrane. The protein resides in the sarcoplasmic reticulum membrane. It localises to the mitochondrion membrane. The protein localises to the membrane. In terms of biological role, reversibly inhibits the activity of ATP2A2/SERCA2 in cardiac sarcoplasmic reticulum by decreasing the apparent affinity of the ATPase for Ca(2+). Binds preferentially to the ATP-bound E1 conformational form of ATP2A2 which predominates at low Ca(2+) concentrations during the diastolic phase of the cardiac cycle. Inhibits ATP2A2 Ca(2+) affinity by disrupting its allosteric activation by ATP. Modulates the contractility of the heart muscle in response to physiological stimuli via its effects on ATP2A2. Modulates calcium re-uptake during muscle relaxation and plays an important role in calcium homeostasis in the heart muscle. The degree of ATP2A2 inhibition depends on the oligomeric state of PLN. ATP2A2 inhibition is alleviated by PLN phosphorylation. In Gallus gallus (Chicken), this protein is Phospholamban (PLN).